Reading from the N-terminus, the 596-residue chain is Phosphoenolpyruvate carboxykinase [GTP] (596 aa).

Substrate-binding positions include Arg-77 and 205 to 207; that span reads YGG. Lys-214 and His-234 together coordinate Mn(2+). Ser-256 is a substrate binding site. 257-262 is a binding site for GTP; it reads ACGKTN. The active site involves Cys-258. Asp-283 is a binding site for Mn(2+). The segment at 362–388 is disordered; that stretch reads KKGSTEKAAHPNSRFTAPAKNNPAISP. 373–375 contributes to the substrate binding site; that stretch reads NSR. GTP contacts are provided by residues Arg-375, Arg-406, and 499–502; that span reads YGDN.

The protein belongs to the phosphoenolpyruvate carboxykinase [GTP] family. Monomer. It depends on Mn(2+) as a cofactor.

The protein resides in the cytoplasm. The catalysed reaction is oxaloacetate + GTP = phosphoenolpyruvate + GDP + CO2. It functions in the pathway carbohydrate biosynthesis; gluconeogenesis. Its function is as follows. Catalyzes the conversion of oxaloacetate (OAA) to phosphoenolpyruvate (PEP), the rate-limiting step in the metabolic pathway that produces glucose from lactate and other precursors derived from the citric acid cycle. The sequence is that of Phosphoenolpyruvate carboxykinase [GTP] from Anaeromyxobacter dehalogenans (strain 2CP-C).